The primary structure comprises 400 residues: 3-phenylpropionate/cinnamic acid dioxygenase ferredoxin--NAD(+) reductase component (400 aa).

5-36 provides a ligand contact to FAD; that stretch reads TIIIVGGGQAAAMAAASLRQQGFTGELHLFSD. 146–174 provides a ligand contact to NAD(+); that stretch reads SVVIVGAGTIGLELAASATQRRCKVTVIE.

It belongs to the bacterial ring-hydroxylating dioxygenase ferredoxin reductase family. In terms of assembly, this dioxygenase system consists of four proteins: the two subunits of the hydroxylase component (HcaE and HcaF), a ferredoxin (HcaC) and a ferredoxin reductase (HcaD). It depends on FAD as a cofactor.

The catalysed reaction is 2 reduced [2Fe-2S]-[ferredoxin] + NAD(+) + H(+) = 2 oxidized [2Fe-2S]-[ferredoxin] + NADH. The protein operates within aromatic compound metabolism; 3-phenylpropanoate degradation. Its function is as follows. Part of the multicomponent 3-phenylpropionate dioxygenase, that converts 3-phenylpropionic acid (PP) and cinnamic acid (CI) into 3-phenylpropionate-dihydrodiol (PP-dihydrodiol) and cinnamic acid-dihydrodiol (CI-dihydrodiol), respectively. This Escherichia coli O157:H7 protein is 3-phenylpropionate/cinnamic acid dioxygenase ferredoxin--NAD(+) reductase component.